Here is a 1135-residue protein sequence, read N- to C-terminus: Phytochrome C (1135 aa).

The span at 1 to 11 shows a compositional bias: polar residues; sequence MSSPLNNRGTC. Positions 1-26 are disordered; it reads MSSPLNNRGTCSRSSSARSRHSARVV. In terms of domain architecture, GAF spans 216–399; that stretch reads NLSLLCDVLV…VFGIQLNKEV (184 aa). Position 321 (Cys-321) interacts with phytochromobilin. PAS domains are found at residues 618-688 and 748-822; these read VTNE…LQGI and IQGD…TKLS. The region spanning 902–1122 is the Histidine kinase domain; sequence YIHQELRNPL…IILIEFPVAQ (221 aa).

It belongs to the phytochrome family. In terms of assembly, homodimer. Contains one covalently linked phytochromobilin chromophore.

In terms of biological role, regulatory photoreceptor which exists in two forms that are reversibly interconvertible by light: the Pr form that absorbs maximally in the red region of the spectrum and the Pfr form that absorbs maximally in the far-red region. Photoconversion of Pr to Pfr induces an array of morphogenic responses, whereas reconversion of Pfr to Pr cancels the induction of those responses. Pfr controls the expression of a number of nuclear genes including those encoding the small subunit of ribulose-bisphosphate carboxylase, chlorophyll A/B binding protein, protochlorophyllide reductase, rRNA, etc. It also controls the expression of its own gene(s) in a negative feedback fashion. This Sorghum bicolor (Sorghum) protein is Phytochrome C (PHYC).